Reading from the N-terminus, the 371-residue chain is S-adenosylmethionine:tRNA ribosyltransferase-isomerase (371 aa).

This sequence belongs to the QueA family. In terms of assembly, monomer.

The protein localises to the cytoplasm. It catalyses the reaction 7-aminomethyl-7-carbaguanosine(34) in tRNA + S-adenosyl-L-methionine = epoxyqueuosine(34) in tRNA + adenine + L-methionine + 2 H(+). The protein operates within tRNA modification; tRNA-queuosine biosynthesis. Its function is as follows. Transfers and isomerizes the ribose moiety from AdoMet to the 7-aminomethyl group of 7-deazaguanine (preQ1-tRNA) to give epoxyqueuosine (oQ-tRNA). The polypeptide is S-adenosylmethionine:tRNA ribosyltransferase-isomerase (Nitratidesulfovibrio vulgaris (strain DP4) (Desulfovibrio vulgaris)).